The sequence spans 417 residues: MLKRDMTIANYDPQLWQAITDETRRQEEHIELIASENYTSPRVMEAQGSQLTNKYAEGYPAKRYYGGCEYVDVVETLAIERAKELFGATYANVQPHSGSQANSAVYMALLQPGDTVLGMNLAHGGHLTHGSPVNFSGKLYNIIPYGIDESGKIDYDEMERLAVEHKPKMMIGGFSAYSGIVDWARMREIADKIGAWLFVDMAHVAGLIAAGVYPNPVPHAHVVTSTTHKTLAGPRGGLILSAADDEDLYKKLNSAVFPGGQGGPLMHVIAGKAVAFKEALEPEFKTYQAQVVKNAKAMAATFIERGYKIVSGGTDNHLMLVDLIGRELTGKEADAALGKANITVNKNSVPNDPRSPFVTSGVRIGTPAITRRGFKEAESIHLTNWICDVLDNHDNDEVLANTREKVLDICRRFPVYA.

(6S)-5,6,7,8-tetrahydrofolate contacts are provided by residues leucine 121 and 125-127 (GHL). Position 229 is an N6-(pyridoxal phosphate)lysine (lysine 229). Residue 355–357 (SPF) participates in (6S)-5,6,7,8-tetrahydrofolate binding.

Belongs to the SHMT family. In terms of assembly, homodimer. Pyridoxal 5'-phosphate is required as a cofactor.

Its subcellular location is the cytoplasm. It catalyses the reaction (6R)-5,10-methylene-5,6,7,8-tetrahydrofolate + glycine + H2O = (6S)-5,6,7,8-tetrahydrofolate + L-serine. It functions in the pathway one-carbon metabolism; tetrahydrofolate interconversion. The protein operates within amino-acid biosynthesis; glycine biosynthesis; glycine from L-serine: step 1/1. In terms of biological role, catalyzes the reversible interconversion of serine and glycine with tetrahydrofolate (THF) serving as the one-carbon carrier. This reaction serves as the major source of one-carbon groups required for the biosynthesis of purines, thymidylate, methionine, and other important biomolecules. Also exhibits THF-independent aldolase activity toward beta-hydroxyamino acids, producing glycine and aldehydes, via a retro-aldol mechanism. The chain is Serine hydroxymethyltransferase from Aeromonas salmonicida (strain A449).